We begin with the raw amino-acid sequence, 348 residues long: Protein RecA (348 aa).

64–71 (GPESSGKT) serves as a coordination point for ATP. Residues 325 to 335 (YEIDGSNKEPL) show a composition bias toward basic and acidic residues. The segment at 325–348 (YEIDGSNKEPLDEGEETLSLLDDE) is disordered. Over residues 336–348 (DEGEETLSLLDDE) the composition is skewed to acidic residues.

Belongs to the RecA family.

Its subcellular location is the cytoplasm. Can catalyze the hydrolysis of ATP in the presence of single-stranded DNA, the ATP-dependent uptake of single-stranded DNA by duplex DNA, and the ATP-dependent hybridization of homologous single-stranded DNAs. It interacts with LexA causing its activation and leading to its autocatalytic cleavage. The protein is Protein RecA of Listeria monocytogenes serotype 4b (strain CLIP80459).